A 148-amino-acid polypeptide reads, in one-letter code: MASGTFDIIHPGHGFYLSESKKLGGDNAILMVVVATDKTVKNHKRVPIVGEKQRCEMVSMLKGVDEAYVGDEKDPFKIVKEKKPDIITIGPDQNFNPDSLHKSLLKKGLDIKVVKINDYKKFELDSSCKIIRKIKQTDFDMDYLENCQ.

ATP is bound by residues 5-6 (TF), 10-13 (HPGH), D92, and Y119.

Belongs to the archaeal FAD synthase family. In terms of assembly, homodimer. It depends on a divalent metal cation as a cofactor.

It catalyses the reaction FMN + ATP + H(+) = FAD + diphosphate. Its pathway is cofactor biosynthesis; FAD biosynthesis; FAD from FMN: step 1/1. Its function is as follows. Catalyzes the transfer of the AMP portion of ATP to flavin mononucleotide (FMN) to produce flavin adenine dinucleotide (FAD) coenzyme. The chain is FAD synthase from Methanosphaera stadtmanae (strain ATCC 43021 / DSM 3091 / JCM 11832 / MCB-3).